A 278-amino-acid polypeptide reads, in one-letter code: Ras-related protein Rab-40A-like (278 aa).

GTP contacts are provided by Gly-26, Lys-27, and Ser-28. Mg(2+) is bound at residue Ser-28. Residues 41–49 (SPYSHLGGI) are switch-I. Residue Asp-69 coordinates Mg(2+). Gly-72, Asn-126, and Arg-127 together coordinate GTP. The switch-II stretch occupies residues 72 to 88 (GQGRFCTIFRSYSRGAQ). The SOCS box domain maps to 175 to 228 (LLRHRLNWLGRPSKVLSLQDLCCRTIVSCTPVHLVDKLPLPIALRSHLKSFSMA). Cys-270 carries S-palmitoyl cysteine lipidation. The S-geranylgeranyl cysteine moiety is linked to residue Cys-275.

The protein belongs to the small GTPase superfamily. Rab family. Requires Mg(2+) as cofactor. In terms of tissue distribution, expressed in brain, lung, heart, skeletal muscle, kidney and liver. Highest expression in brain. Expressed in fetal brain and kidney.

The protein localises to the membrane. Its subcellular location is the cytoplasm. It is found in the mitochondrion. The enzyme catalyses GTP + H2O = GDP + phosphate + H(+). It participates in protein modification; protein ubiquitination. Its activity is regulated as follows. Regulated by guanine nucleotide exchange factors (GEFs) which promote the exchange of bound GDP for free GTP. Regulated by GTPase activating proteins (GAPs) which increase the GTP hydrolysis activity. Inhibited by GDP dissociation inhibitors (GDIs). In terms of biological role, may act as substrate-recognition component of the ECS(RAB40) E3 ubiquitin ligase complex which mediates the ubiquitination and subsequent proteasomal degradation of target proteins. The Rab40 subfamily belongs to the Rab family that are key regulators of intracellular membrane trafficking, from the formation of transport vesicles to their fusion with membranes. Rabs cycle between an inactive GDP-bound form and an active GTP-bound form that is able to recruit to membranes different sets of downstream effectors directly responsible for vesicle formation, movement, tethering and fusion. This is Ras-related protein Rab-40A-like from Homo sapiens (Human).